Consider the following 384-residue polypeptide: F-box A protein 224 (384 aa).

One can recognise an F-box domain in the interval 71-122; the sequence is PKSLSDFPIGVMYDVLGHVDPFERLVLRKVSRNLRDVVQKMRCELDALYVNK.

The protein belongs to the FTH family.

In Caenorhabditis elegans, this protein is F-box A protein 224 (fbxa-224).